Here is a 160-residue protein sequence, read N- to C-terminus: Competence protein ComGD (160 aa).

A helical membrane pass occupies residues 30–50 (AFTMLESLLVLGLVSILALGL).

As to quaternary structure, the transformation pili are flexible filaments, consisting mainly of the major pilin ComGC and smaller amounts of the minor pilins, including at least ComGD, ComGF and ComGG, and perhaps ComGE. Interacts with ComGE. Interacts with ComGF. Interacts with ComGG.

The protein resides in the cell membrane. It localises to the cell surface. It is found in the fimbrium. Functionally, required for formation of the type IV-like pilus (T4P) that plays a role in transformation. Transformation pili are dynamically extended and retracted, perhaps thereby promoting DNA uptake and transformation. Involved in transformation. Required for DNA binding. The protein is Competence protein ComGD of Streptococcus pneumoniae (strain ATCC BAA-255 / R6).